The following is a 186-amino-acid chain: ATP synthase subunit b' (186 aa).

The helical transmembrane segment at 39–59 threads the bilayer; sequence IFWLLLALGAIYWLLKNIAIP.

The protein belongs to the ATPase B chain family. In terms of assembly, F-type ATPases have 2 components, F(1) - the catalytic core - and F(0) - the membrane proton channel. F(1) has five subunits: alpha(3), beta(3), gamma(1), delta(1), epsilon(1). F(0) has four main subunits: a(1), b(1), b'(1) and c(10-14). The alpha and beta chains form an alternating ring which encloses part of the gamma chain. F(1) is attached to F(0) by a central stalk formed by the gamma and epsilon chains, while a peripheral stalk is formed by the delta, b and b' chains.

The protein localises to the cellular chromatophore membrane. Functionally, f(1)F(0) ATP synthase produces ATP from ADP in the presence of a proton or sodium gradient. F-type ATPases consist of two structural domains, F(1) containing the extramembraneous catalytic core and F(0) containing the membrane proton channel, linked together by a central stalk and a peripheral stalk. During catalysis, ATP synthesis in the catalytic domain of F(1) is coupled via a rotary mechanism of the central stalk subunits to proton translocation. In terms of biological role, component of the F(0) channel, it forms part of the peripheral stalk, linking F(1) to F(0). The b'-subunit is a diverged and duplicated form of b found in plants and photosynthetic bacteria. This Rhodobacter capsulatus (Rhodopseudomonas capsulata) protein is ATP synthase subunit b'.